A 349-amino-acid polypeptide reads, in one-letter code: DNA polymerase IV (349 aa).

Residues 4 to 185 (IIHIDCDCFY…LPVAKLHGVG (182 aa)) form the UmuC domain. Mg(2+) contacts are provided by Asp-8 and Asp-103. The active site involves Glu-104.

This sequence belongs to the DNA polymerase type-Y family. Monomer. The cofactor is Mg(2+).

The protein resides in the cytoplasm. The enzyme catalyses DNA(n) + a 2'-deoxyribonucleoside 5'-triphosphate = DNA(n+1) + diphosphate. Its function is as follows. Poorly processive, error-prone DNA polymerase involved in untargeted mutagenesis. Copies undamaged DNA at stalled replication forks, which arise in vivo from mismatched or misaligned primer ends. These misaligned primers can be extended by PolIV. Exhibits no 3'-5' exonuclease (proofreading) activity. May be involved in translesional synthesis, in conjunction with the beta clamp from PolIII. The protein is DNA polymerase IV of Pseudomonas aeruginosa (strain UCBPP-PA14).